The chain runs to 557 residues: Alpha-barbatene synthase (557 aa).

The (2E,6E)-farnesyl diphosphate site is built by Arg273, Asp310, Asp314, Arg451, and Asp454. Residues Asp310 and Asp314 each coordinate Mg(2+). The short motif at 310–314 is the DDXXD motif element; that stretch reads DDACD. Positions 454, 455, and 462 each coordinate Mg(2+).

Belongs to the terpene synthase family. Tpsa subfamily. Monomer. Requires Mg(2+) as cofactor. The cofactor is Mn(2+). Expressed exclusively in flowers. Expressed in intrafloral nectaries and in the funiculus within the ovules.

Its subcellular location is the cytoplasm. The enzyme catalyses (2E,6E)-farnesyl diphosphate = (+)-alpha-barbatene + diphosphate. The catalysed reaction is (2E,6E)-farnesyl diphosphate = (+)-thujopsene + diphosphate. It catalyses the reaction (2E,6E)-farnesyl diphosphate = (+)-beta-chamigrene + diphosphate. It carries out the reaction (2E,6E)-farnesyl diphosphate = (+)-beta-barbatene + diphosphate. The enzyme catalyses (2E,6E)-farnesyl diphosphate = beta-sesquiphellandrene + diphosphate. The catalysed reaction is (2E,6E)-farnesyl diphosphate = (S)-beta-bisabolene + diphosphate. It catalyses the reaction (2E,6E)-farnesyl diphosphate = (-)-alpha-cuprenene + diphosphate. It carries out the reaction (2E,6E)-farnesyl diphosphate = alpha-zingiberene + diphosphate. The enzyme catalyses (2E,6E)-farnesyl diphosphate = beta-acoradiene + diphosphate. The catalysed reaction is (2E,6E)-farnesyl diphosphate = (E)-beta-farnesene + diphosphate. It functions in the pathway secondary metabolite biosynthesis; terpenoid biosynthesis. In terms of biological role, involved in the biosynthesis of over 15 sesquiterpenes (C15). The major products are (+)-alpha-barbatene (27.3%), (+)-thujopsene (17.8%) and (+)-beta-chamigrene (9.9%). Can use farnesyl diphosphate or geranyl diphosphate as substrates, but not geranylgeranyl diphosphate. This is Alpha-barbatene synthase from Arabidopsis thaliana (Mouse-ear cress).